The sequence spans 272 residues: Acetylglutamate kinase (272 aa).

Substrate-binding positions include 41–42 (GG), Arg63, and Asn166.

It belongs to the acetylglutamate kinase family. ArgB subfamily.

It is found in the cytoplasm. It carries out the reaction N-acetyl-L-glutamate + ATP = N-acetyl-L-glutamyl 5-phosphate + ADP. The protein operates within amino-acid biosynthesis; L-arginine biosynthesis; N(2)-acetyl-L-ornithine from L-glutamate: step 2/4. In terms of biological role, catalyzes the ATP-dependent phosphorylation of N-acetyl-L-glutamate. In Anaeromyxobacter sp. (strain K), this protein is Acetylglutamate kinase.